The following is a 428-amino-acid chain: Elongation factor 1-alpha (428 aa).

Residues 5–225 (KPILNVAFIG…DAFQPPEKPT (221 aa)) form the tr-type G domain. The tract at residues 14-21 (GHVDAGKS) is G1. Residue 14–21 (GHVDAGKS) participates in GTP binding. Residue Ser21 coordinates Mg(2+). Residues 70–74 (GVTID) are G2. The tract at residues 91-94 (DCPG) is G3. Residues 91–95 (DCPGH) and 149–152 (NKMD) contribute to the GTP site. Positions 149–152 (NKMD) are G4. The segment at 189 to 191 (ASL) is G5.

The protein belongs to the TRAFAC class translation factor GTPase superfamily. Classic translation factor GTPase family. EF-Tu/EF-1A subfamily.

It is found in the cytoplasm. The enzyme catalyses GTP + H2O = GDP + phosphate + H(+). Functionally, GTP hydrolase that promotes the GTP-dependent binding of aminoacyl-tRNA to the A-site of ribosomes during protein biosynthesis. This chain is Elongation factor 1-alpha, found in Methanococcus maripaludis (strain C6 / ATCC BAA-1332).